A 209-amino-acid chain; its full sequence is NADH-ubiquinone oxidoreductase subunit 9 (209 aa).

It belongs to the complex I 30 kDa subunit family. As to quaternary structure, complex I is composed of about 30 different subunits.

Its subcellular location is the mitochondrion inner membrane. It carries out the reaction a ubiquinone + NADH + 5 H(+)(in) = a ubiquinol + NAD(+) + 4 H(+)(out). In terms of biological role, core subunit of the mitochondrial membrane respiratory chain NADH dehydrogenase (Complex I) that is believed to belong to the minimal assembly required for catalysis. Complex I functions in the transfer of electrons from NADH to the respiratory chain. The immediate electron acceptor for the enzyme is believed to be ubiquinone. This chain is NADH-ubiquinone oxidoreductase subunit 9 (NAD9), found in Paramecium primaurelia.